Here is a 378-residue protein sequence, read N- to C-terminus: UDP-4-amino-4-deoxy-L-arabinose--oxoglutarate aminotransferase (378 aa).

Lysine 182 bears the N6-(pyridoxal phosphate)lysine mark.

It belongs to the DegT/DnrJ/EryC1 family. ArnB subfamily. Homodimer. Requires pyridoxal 5'-phosphate as cofactor.

The enzyme catalyses UDP-4-amino-4-deoxy-beta-L-arabinose + 2-oxoglutarate = UDP-beta-L-threo-pentopyranos-4-ulose + L-glutamate. The protein operates within nucleotide-sugar biosynthesis; UDP-4-deoxy-4-formamido-beta-L-arabinose biosynthesis; UDP-4-deoxy-4-formamido-beta-L-arabinose from UDP-alpha-D-glucuronate: step 2/3. Its pathway is bacterial outer membrane biogenesis; lipopolysaccharide biosynthesis. In terms of biological role, catalyzes the conversion of UDP-4-keto-arabinose (UDP-Ara4O) to UDP-4-amino-4-deoxy-L-arabinose (UDP-L-Ara4N). The modified arabinose is attached to lipid A and is required for resistance to polymyxin and cationic antimicrobial peptides. The polypeptide is UDP-4-amino-4-deoxy-L-arabinose--oxoglutarate aminotransferase (Aeromonas hydrophila subsp. hydrophila (strain ATCC 7966 / DSM 30187 / BCRC 13018 / CCUG 14551 / JCM 1027 / KCTC 2358 / NCIMB 9240 / NCTC 8049)).